Here is a 474-residue protein sequence, read N- to C-terminus: Aspartyl protease family protein At5g10770 (474 aa).

The signal sequence occupies residues 1-25; that stretch reads MSINRNLLNIIIILCICLNLGCNDG. A Peptidase A1 domain is found at 132 to 469; sequence YIVTVGLGTP…DGAGGRVGFA (338 aa). Catalysis depends on residues Asp-150 and Asp-352. Cys-391 and Cys-432 are joined by a disulfide. Asn-443 carries the GPI-anchor amidated asparagine lipid modification. Positions 444 to 474 are cleaved as a propeptide — removed in mature form; sequence AAIFGNVQQQTLEVVYDGAGGRVGFAPNGCS.

This sequence belongs to the peptidase A1 family.

Its subcellular location is the cell membrane. Its function is as follows. Probably not redundant with AED1 and not involved in restriction of salicylic acid (SA) or systemic acquired resistance (SAR) signaling. This chain is Aspartyl protease family protein At5g10770, found in Arabidopsis thaliana (Mouse-ear cress).